A 432-amino-acid polypeptide reads, in one-letter code: Guanine nucleotide-binding protein subunit alpha (432 aa).

The segment at 1–97 (MGGCMSTPEA…SKGNKDRSNQ (97 aa)) is disordered. G2 is lipidated: N-myristoyl glycine. C4 is lipidated: S-palmitoyl cysteine. Low complexity predominate over residues 21 to 52 (PSTSTSSRPPQASTSATATAAGAGTSAANGTA). In terms of domain architecture, G-alpha spans 111-432 (KECKILLLGS…QNALRDSGIL (322 aa)). The G1 motif stretch occupies residues 114 to 127 (KILLLGSGESGKST). GTP-binding residues include E122, S123, G124, K125, S126, T127, D230, L255, T261, G283, N349, K350, D352, and A404. S126 lines the Mg(2+) pocket. Positions 253–261 (DVLRARTKT) are G2 motif. T261 contacts Mg(2+). The interval 276 to 285 (IHMFDVGGQR) is G3 motif. The G4 motif stretch occupies residues 345–352 (ILFLNKID). A G5 motif region spans residues 402 to 407 (TQATDT).

This sequence belongs to the G-alpha family. G proteins are composed of 3 units; alpha, beta and gamma. The alpha chain contains the guanine nucleotide binding site. Mg(2+) serves as cofactor.

Guanine nucleotide-binding proteins (G proteins) are involved as modulators or transducers in various transmembrane signaling systems. Involved in the mating pathway. The sequence is that of Guanine nucleotide-binding protein subunit alpha (GPA1) from Cryptococcus neoformans var. neoformans serotype D (strain B-3501A) (Filobasidiella neoformans).